Here is a 252-residue protein sequence, read N- to C-terminus: UPF0246 protein FP0718 (252 aa).

This sequence belongs to the UPF0246 family.

In Flavobacterium psychrophilum (strain ATCC 49511 / DSM 21280 / CIP 103535 / JIP02/86), this protein is UPF0246 protein FP0718.